Here is an 843-residue protein sequence, read N- to C-terminus: MPLSYPHFRKLLLLDDEAGPLEEELPRLADEDLNRRVAADLNLQLPNVSIPWTHKVGNFTGLYSSTVPAFNPNWSTPSFPDIHLHQDLISKCEQFVGPLTKNELRRLKLVMPARFYPKVTKYFPMDKGIKPYYPEHAVNHYFKTRHYLHTLWKAGILYKRESTRSASFCGSPYSWEQELQHGSTSLNDTKRHGTESLCAQSSGILSRPSAGSAIQSKFQQSRLGLQHKQGQLANGKQGRSGRLRSRVHTPTRWPAGVEPSSTRCVNNLASRSASCFHQSAVREKANPSLSTSKRHTSTGNAVELNPVPPSSVGSQGKGSVLPCWWLQFRDTEPCSDYCLSHIINLLEDWGPCYEHGQHYIRTPRTPARVTGGVFLVDKNPHNTTESRLVVDFSQFSRGTTRVSWPKFAVPNLQSLTNLLSSNLSWLSLDVSAAFYHLPLHPAAMPHLLVGSSGLSRYVARLSSTSRIHDHQHGTLQNLHNSCTRNLYVSLLLLFQTLGRKLHLYSHPIILGFRKIPMGVGLSPFLLAQFTSAICSVVRRAFPHCLAFSYMDDLVLGAKSVQHLESLYTAVTNFLLSVGIHLNTSKTKRWGYSLHFMGYVIGSWGSLPQDHIVHKIKECFRKLPVNRPIDWKVCQRIVGLLGFAAPFTQCGYPALMPLYACITAKQAFVFSPTYKAFLCKQYMNLYPVARQRPGLCQVFADATPTGWGLAIGHQRMRGTFVAPLPIHTAELLAACFARSRSGATLIGTDNSVVLSRKYTSFPWLLGCAANWILRGTSFVYVPSALNPADDPSRGRLGLYRPLLRLPFQPTTGRTSLYADSPSVPSHLPDRVHFASPLHVAWRPP.

The segment at 1–177 is terminal protein domain (TP); that stretch reads MPLSYPHFRK…FCGSPYSWEQ (177 aa). Residues 178 to 346 are spacer; the sequence is ELQHGSTSLN…YCLSHIINLL (169 aa). Disordered regions lie at residues 228–259 and 283–314; these read KQGQ…GVEP and EKAN…SVGS. Over residues 239–249 the composition is skewed to basic residues; sequence RSGRLRSRVHT. The tract at residues 347–690 is polymerase/reverse transcriptase domain (RT); the sequence is EDWGPCYEHG…YMNLYPVARQ (344 aa). Residues 357–600 enclose the Reverse transcriptase domain; it reads QHYIRTPRTP…YSLHFMGYVI (244 aa). Mg(2+) is bound by residues Asp429, Asp551, and Asp552.

It belongs to the hepadnaviridae P protein family.

It catalyses the reaction DNA(n) + a 2'-deoxyribonucleoside 5'-triphosphate = DNA(n+1) + diphosphate. The catalysed reaction is Endonucleolytic cleavage to 5'-phosphomonoester.. Its activity is regulated as follows. Activated by host HSP70 and HSP40 in vitro to be able to bind the epsilon loop of the pgRNA. Because deletion of the RNase H region renders the protein partly chaperone-independent, the chaperones may be needed indirectly to relieve occlusion of the RNA-binding site by this domain. Inhibited by several reverse-transcriptase inhibitors: Lamivudine, Adefovir and Entecavir. In terms of biological role, multifunctional enzyme that converts the viral RNA genome into dsDNA in viral cytoplasmic capsids. This enzyme displays a DNA polymerase activity that can copy either DNA or RNA templates, and a ribonuclease H (RNase H) activity that cleaves the RNA strand of RNA-DNA heteroduplexes in a partially processive 3'- to 5'-endonucleasic mode. Neo-synthesized pregenomic RNA (pgRNA) are encapsidated together with the P protein, and reverse-transcribed inside the nucleocapsid. Initiation of reverse-transcription occurs first by binding the epsilon loop on the pgRNA genome, and is initiated by protein priming, thereby the 5'-end of (-)DNA is covalently linked to P protein. Partial (+)DNA is synthesized from the (-)DNA template and generates the relaxed circular DNA (RC-DNA) genome. After budding and infection, the RC-DNA migrates in the nucleus, and is converted into a plasmid-like covalently closed circular DNA (cccDNA). The activity of P protein does not seem to be necessary for cccDNA generation, and is presumably released from (+)DNA by host nuclear DNA repair machinery. This is Protein P from Homo sapiens (Human).